The sequence spans 993 residues: Ephrin type-B receptor 3 (993 aa).

The signal sequence occupies residues 1–29 (MAGARPPPGLLPLLAPLLLPLLLPAGCWA). Residues 30 to 554 (LEETLMDTKW…AQQLQEQLPL (525 aa)) are Extracellular-facing. The region spanning 31–209 (EETLMDTKWV…FYKKCASTTA (179 aa)) is the Eph LBD domain. A disulfide bridge connects residues cysteine 73 and cysteine 191. Fibronectin type-III domains lie at 331–446 (VPSP…TNQA) and 447–540 (APSE…TTSE). N-linked (GlcNAc...) asparagine glycosylation is found at asparagine 343 and asparagine 440. The chain crosses the membrane as a helical span at residues 555-575 (IVGSTVAGFVFMVVVVVIALV). The Cytoplasmic segment spans residues 576–993 (CLRKQRHGPD…QMNQTLPVQV (418 aa)). Residue tyrosine 609 is modified to Phosphotyrosine; by autocatalysis. Residues 628 to 891 (VKIEEVIGAG…QIVNTLDKLI (264 aa)) enclose the Protein kinase domain. ATP is bound by residues 634–642 (IGAGEFGEV) and lysine 660. Residue aspartate 753 is the Proton acceptor of the active site. An SAM domain is found at 920–984 (TTFTTVGDWL…LCSIQDMRLQ (65 aa)). Positions 991–993 (VQV) match the PDZ-binding motif.

Belongs to the protein kinase superfamily. Tyr protein kinase family. Ephrin receptor subfamily. As to quaternary structure, heterotetramer upon binding of the ligand. The heterotetramer is composed of an ephrin dimer and a receptor dimer. Oligomerization is probably required to induce biological responses. Phosphorylated. Autophosphorylates upon ligand-binding. Autophosphorylation on Tyr-609 is required for interaction with SH2 domain-containing proteins. Post-translationally, ubiquitinated by RNF186, mainly through 'Lys-48' and 'Lys-63'-linked polyubiquitin chains. Expressed in cells of the retinal ganglion cell layer during retinal axon guidance to the optic disk. Expressed by Paneth and progenitor cells in the crypts of the intestinal epithelium (at protein level). Expressed in myogenic progenitor cells.

The protein resides in the cell membrane. It is found in the cell projection. Its subcellular location is the dendrite. The catalysed reaction is L-tyrosyl-[protein] + ATP = O-phospho-L-tyrosyl-[protein] + ADP + H(+). In terms of biological role, receptor tyrosine kinase which binds promiscuously transmembrane ephrin-B family ligands residing on adjacent cells, leading to contact-dependent bidirectional signaling into neighboring cells. The signaling pathway downstream of the receptor is referred to as forward signaling while the signaling pathway downstream of the ephrin ligand is referred to as reverse signaling. Generally has an overlapping and redundant function with EPHB2. Like EPHB2, functions in axon guidance during development regulating for instance the neurons forming the corpus callosum and the anterior commissure, 2 major interhemispheric connections between the temporal lobes of the cerebral cortex. In addition to its role in axon guidance also plays an important redundant role with other ephrin-B receptors in development and maturation of dendritic spines and the formation of excitatory synapses. Controls other aspects of development through regulation of cell migration and positioning. This includes angiogenesis, palate development and thymic epithelium development for instance. Forward and reverse signaling through the EFNB2/EPHB3 complex also regulate migration and adhesion of cells that tubularize the urethra and septate the cloaca. Finally, plays an important role in intestinal epithelium differentiation segregating progenitor from differentiated cells in the crypt. The chain is Ephrin type-B receptor 3 (Ephb3) from Mus musculus (Mouse).